We begin with the raw amino-acid sequence, 431 residues long: Argininosuccinate lyase (431 aa).

Belongs to the lyase 1 family. Argininosuccinate lyase subfamily.

Its subcellular location is the cytoplasm. The catalysed reaction is 2-(N(omega)-L-arginino)succinate = fumarate + L-arginine. It functions in the pathway amino-acid biosynthesis; L-arginine biosynthesis; L-arginine from L-ornithine and carbamoyl phosphate: step 3/3. The polypeptide is Argininosuccinate lyase (Stenotrophomonas maltophilia (strain R551-3)).